A 226-amino-acid chain; its full sequence is Protein DVU_0532 (226 aa).

6 consecutive transmembrane segments (helical) span residues 1–23 (MYAFLTGPMLWASLLVFFGGLLA), 46–57 (AIGLQGAVQSAL), 73–99 (FFTVAFFLFHIGAVLVPLFLAGHNVIL), 112–131 (MGVADTLTVLAIIGLVMIAL), 141–164 (ILTTGYDWFILAVSAAPFVTGFLA), and 194–222 (LSHIVLFFMSRGQLGMDYAIKRGGATRGP).

The cofactor is heme b.

The protein localises to the cell membrane. Its function is as follows. HMWC (high-molecular-weight cytochrome c), ORF2, ORF3, ORF4, ORF5 and ORF6 in the HMC operon form a transmembrane protein complex that allows electron flow from the periplasmic hydrogenase to the cytoplasmic enzymes that catalyze reduction of sulfates. The protein is Protein DVU_0532 of Nitratidesulfovibrio vulgaris (strain ATCC 29579 / DSM 644 / CCUG 34227 / NCIMB 8303 / VKM B-1760 / Hildenborough) (Desulfovibrio vulgaris).